The following is a 156-amino-acid chain: Small ribosomal subunit protein uS7 (156 aa).

It belongs to the universal ribosomal protein uS7 family. Part of the 30S ribosomal subunit. Contacts proteins S9 and S11.

In terms of biological role, one of the primary rRNA binding proteins, it binds directly to 16S rRNA where it nucleates assembly of the head domain of the 30S subunit. Is located at the subunit interface close to the decoding center, probably blocks exit of the E-site tRNA. The chain is Small ribosomal subunit protein uS7 from Shewanella halifaxensis (strain HAW-EB4).